We begin with the raw amino-acid sequence, 407 residues long: Phosphopentomutase (407 aa).

Residues D10, D306, H311, D347, H348, and H359 each coordinate Mn(2+).

Belongs to the phosphopentomutase family. Mn(2+) serves as cofactor.

It is found in the cytoplasm. It carries out the reaction 2-deoxy-alpha-D-ribose 1-phosphate = 2-deoxy-D-ribose 5-phosphate. It catalyses the reaction alpha-D-ribose 1-phosphate = D-ribose 5-phosphate. It participates in carbohydrate degradation; 2-deoxy-D-ribose 1-phosphate degradation; D-glyceraldehyde 3-phosphate and acetaldehyde from 2-deoxy-alpha-D-ribose 1-phosphate: step 1/2. Its function is as follows. Isomerase that catalyzes the conversion of deoxy-ribose 1-phosphate (dRib-1-P) and ribose 1-phosphate (Rib-1-P) to deoxy-ribose 5-phosphate (dRib-5-P) and ribose 5-phosphate (Rib-5-P), respectively. This chain is Phosphopentomutase, found in Salmonella arizonae (strain ATCC BAA-731 / CDC346-86 / RSK2980).